The chain runs to 372 residues: Type II methyltransferase M1.HphI (372 aa).

In terms of domain architecture, SAM-dependent MTase C5-type spans Leu-45 to Glu-372. Residue Cys-122 is part of the active site.

The protein belongs to the class I-like SAM-binding methyltransferase superfamily. C5-methyltransferase family.

The catalysed reaction is a 2'-deoxycytidine in DNA + S-adenosyl-L-methionine = a 5-methyl-2'-deoxycytidine in DNA + S-adenosyl-L-homocysteine + H(+). Its function is as follows. A methylase that recognizes the double-stranded sequence 5'-GGTGA-3' and protects the DNA from cleavage by the HphI endonuclease. Probably methylates C-2 on the bottom strand. This Haemophilus parahaemolyticus protein is Type II methyltransferase M1.HphI (hphIAM).